A 498-amino-acid polypeptide reads, in one-letter code: Interferon regulatory factor 5 (498 aa).

T10 bears the Phosphothreonine mark. Residues 12–18 (PRRVRLK) carry the Nuclear localization signal motif. Residues 14–122 (RVRLKPWLVA…QPYKIYEVCS (109 aa)) constitute a DNA-binding region (IRF tryptophan pentad repeat). Residues 121–207 (CSNGPAPTDS…SPLAPPPGNP (87 aa)) are disordered. The short motif at 150-160 (LQRMLPSLSLT) is the Nuclear export signal element. S158 is modified (phosphoserine; by TBK1). The segment covering 168-206 (TLQPPTLRPPTLQPPTLQPPVVLGPPAPDPSPLAPPPGN) has biased composition (pro residues). S293 carries the phosphoserine; by TBK1 modification. S301 is subject to Phosphoserine. Residues K411 and K412 each participate in a glycyl lysine isopeptide (Lys-Gly) (interchain with G-Cter in ubiquitin) cross-link. A phosphoserine mark is found at S431, S435, S437, and S440. The residue at position 446 (S446) is a Phosphoserine; by IKKB. Residues 478–498 (PPGAGLGVGQGPWPMHPAGMQ) form a disordered region.

Belongs to the IRF family. In terms of assembly, homodimer, when phosphorylated. Interacts with TASL (via pLxIS motif); interaction takes place downstream of TLR7, TLR8 or TLR9, leading to its activation. Interacts with MYD88 and TRAF6. In terms of processing, phosphorylation of serine and threonine residues by IKBKB in a C-terminal autoinhibitory region, stimulates dimerization, transport into the nucleus, assembly with the coactivator CBP/EP300 and initiation of transcription. Post-translationally, 'Lys-63'-linked polyubiquitination by TRAF6 is required for activation.

It is found in the cytoplasm. The protein localises to the nucleus. Its activity is regulated as follows. Maintained as a monomer in an autoinhibited state. Phosphorylation and activation follow the following steps: innate adapter protein TASL recruits IRF5, thereby licensing IRF5 for phosphorylation by IKBKB. Phosphorylated IRF5 dissociates from the adapter proteins, dimerizes, and then enters the nucleus to induce IFNs. (Microbial infection) Activated upon coronavirus SARS-CoV-2 infection. Its function is as follows. Transcription factor that plays a critical role in innate immunity by activating expression of type I interferon (IFN) IFNA and INFB and inflammatory cytokines downstream of endolysosomal toll-like receptors TLR7, TLR8 and TLR9. Regulates the transcription of type I IFN genes (IFN-alpha and IFN-beta) and IFN-stimulated genes (ISG) by binding to an interferon-stimulated response element (ISRE) in their promoters. Can efficiently activate both the IFN-beta (IFNB) and the IFN-alpha (IFNA) genes and mediate their induction downstream of the TLR-activated, MyD88-dependent pathway. Key transcription factor regulating the IFN response during SARS-CoV-2 infection. The sequence is that of Interferon regulatory factor 5 from Homo sapiens (Human).